A 324-amino-acid polypeptide reads, in one-letter code: Probable pectinesterase A (324 aa).

Residues 1–19 (MHLPSLVLGLLGLGLTASA) form the signal peptide. Residue asparagine 27 is glycosylated (N-linked (GlcNAc...) asparagine). Glutamine 142 serves as a coordination point for substrate. The active-site Proton donor is aspartate 165. The active-site Nucleophile is aspartate 186. Residue asparagine 191 is glycosylated (N-linked (GlcNAc...) asparagine). Substrate-binding residues include arginine 246 and tryptophan 248.

This sequence belongs to the pectinesterase family.

The protein localises to the secreted. It catalyses the reaction [(1-&gt;4)-alpha-D-galacturonosyl methyl ester](n) + n H2O = [(1-&gt;4)-alpha-D-galacturonosyl](n) + n methanol + n H(+). It functions in the pathway glycan metabolism; pectin degradation; 2-dehydro-3-deoxy-D-gluconate from pectin: step 1/5. Its function is as follows. Involved in maceration and soft-rotting of plant tissue. The protein is Probable pectinesterase A (pmeA) of Neosartorya fischeri (strain ATCC 1020 / DSM 3700 / CBS 544.65 / FGSC A1164 / JCM 1740 / NRRL 181 / WB 181) (Aspergillus fischerianus).